The sequence spans 419 residues: Inositol-tetrakisphosphate 1-kinase (419 aa).

Lys18 provides a ligand contact to 1D-myo-inositol 1,3,4-trisphosphate. ATP-binding residues include Arg106 and Lys157. An ATP-grasp domain is found at 117 to 325; the sequence is EAYMKDDRIC…IASVLQGQSS (209 aa). 1D-myo-inositol 1,3,4-trisphosphate contacts are provided by His167 and Lys199. Residues 188 to 199, Ser214, Ser232, and Ser236 each bind ATP; that span reads QNFINHNAVLYK. 3 residues coordinate Mg(2+): Asp281, Asp295, and Asn297. Position 297 (Asn297) interacts with 1D-myo-inositol 1,3,4-trisphosphate. An N6-acetyllysine; by EP300 and CREBBP modification is found at Lys388. Position 401 is a phosphoserine (Ser401). The residue at position 415 (Lys415) is an N6-acetyllysine; by EP300 and CREBBP.

The protein belongs to the ITPK1 family. In terms of assembly, monomer. Interacts with GPS1/COPS1. It depends on Mg(2+) as a cofactor. Acetylation by EP300 and CREBBP destabilizes ITPK1, and down-regulates enzymatic activity. Deacetylated by SIRT1.

The catalysed reaction is 1D-myo-inositol 3,4,5,6-tetrakisphosphate + ATP = 1D-myo-inositol 1,3,4,5,6-pentakisphosphate + ADP + H(+). It catalyses the reaction 1D-myo-inositol 1,3,4-trisphosphate + ATP = 1D-myo-inositol 1,3,4,5-tetrakisphosphate + ADP + H(+). The enzyme catalyses 1D-myo-inositol 1,3,4-trisphosphate + ATP = 1D-myo-inositol 1,3,4,6-tetrakisphosphate + ADP + H(+). It carries out the reaction 1D-myo-inositol 3,4,6-trisphosphate + ATP = 1D-myo-inositol 1,3,4,6-tetrakisphosphate + ADP + H(+). The catalysed reaction is 1D-myo-inositol 1,3,4-trisphosphate + 1D-myo-inositol 1,3,4,5,6-pentakisphosphate = 1D-myo-inositol 3,4,5,6-tetrakisphosphate + 1D-myo-inositol 1,3,4,6-tetrakisphosphate. It catalyses the reaction 1D-myo-inositol 1,3,4-trisphosphate + 1D-myo-inositol 1,3,4,5,6-pentakisphosphate = 1D-myo-inositol 3,4,5,6-tetrakisphosphate + 1D-myo-inositol 1,3,4,5-tetrakisphosphate. Its function is as follows. Kinase that can phosphorylate various inositol polyphosphate such as Ins(3,4,5,6)P4 or Ins(1,3,4)P3. Phosphorylates Ins(3,4,5,6)P4 at position 1 to form Ins(1,3,4,5,6)P5. This reaction is thought to have regulatory importance, since Ins(3,4,5,6)P4 is an inhibitor of plasma membrane Ca(2+)-activated Cl(-) channels, while Ins(1,3,4,5,6)P5 is not. Also phosphorylates Ins(1,3,4)P3 on O-5 and O-6 to form Ins(1,3,4,6)P4, an essential molecule in the hexakisphosphate (InsP6) pathway. Also acts as an inositol polyphosphate phosphatase that dephosphorylates Ins(1,3,4,5)P4 and Ins(1,3,4,6)P4 to Ins(1,3,4)P3, and Ins(1,3,4,5,6)P5 to Ins(3,4,5,6)P4. May also act as an isomerase that interconverts the inositol tetrakisphosphate isomers Ins(1,3,4,5)P4 and Ins(1,3,4,6)P4 in the presence of ADP and magnesium. Probably acts as the rate-limiting enzyme of the InsP6 pathway. Modifies TNF-alpha-induced apoptosis by interfering with the activation of TNFRSF1A-associated death domain. Plays an important role in MLKL-mediated necroptosis. Produces highly phosphorylated inositol phosphates such as inositolhexakisphosphate (InsP6) which bind to MLKL mediating the release of an N-terminal auto-inhibitory region leading to its activation. Essential for activated phospho-MLKL to oligomerize and localize to the cell membrane during necroptosis. This Bos taurus (Bovine) protein is Inositol-tetrakisphosphate 1-kinase (ITPK1).